The sequence spans 216 residues: PRA1 family protein B6 (216 aa).

The residue at position 2 (A2) is an N-acetylalanine. Transmembrane regions (helical) follow at residues 83-103 (LVAI…FLLA), 105-125 (LAAS…LVIG), 135-155 (LGIL…GSLL), 159-179 (LAVG…EDLF), and 186-206 (IGSG…AAAI).

The protein belongs to the PRA1 family. As to quaternary structure, interacts with PRA1B1, PRA1B2, PRA1B3, PRA1B4, PRA1B5 and PRA1E. In terms of tissue distribution, expressed in hypocotyls, roots, lateral roots, lateral root caps, columella cells, leaves and stomata.

It localises to the endoplasmic reticulum membrane. Its function is as follows. May be involved in both secretory and endocytic intracellular trafficking in the endosomal/prevacuolar compartments. This chain is PRA1 family protein B6 (PRA1B6), found in Arabidopsis thaliana (Mouse-ear cress).